The sequence spans 320 residues: Endochitinase (320 aa).

An N-terminal signal peptide occupies residues Met1–Ala23. The Chitin-binding type-1 domain maps to Glu24–Ser64. Cystine bridges form between Cys26/Cys41, Cys35/Cys47, Cys40/Cys54, Cys58/Cys62, Cys101/Cys163, Cys175/Cys182, and Cys281/Cys313. Glu145 functions as the Proton donor in the catalytic mechanism.

Belongs to the glycosyl hydrolase 19 family. Chitinase class I subfamily.

The catalysed reaction is Random endo-hydrolysis of N-acetyl-beta-D-glucosaminide (1-&gt;4)-beta-linkages in chitin and chitodextrins.. Its function is as follows. Defense against chitin-containing fungal pathogens. The polypeptide is Endochitinase (Pisum sativum (Garden pea)).